The chain runs to 640 residues: Threonine--tRNA ligase (640 aa).

One can recognise a TGS domain in the interval 1–61 (MPTITLPDGS…ENDASLQIIT (61 aa)). Positions 242–533 (DHRKIGKRLG…LIEHYEGAFP (292 aa)) are catalytic. Residues Cys333, His384, and His510 each contribute to the Zn(2+) site.

Belongs to the class-II aminoacyl-tRNA synthetase family. As to quaternary structure, homodimer. Zn(2+) serves as cofactor.

It is found in the cytoplasm. It catalyses the reaction tRNA(Thr) + L-threonine + ATP = L-threonyl-tRNA(Thr) + AMP + diphosphate + H(+). In terms of biological role, catalyzes the attachment of threonine to tRNA(Thr) in a two-step reaction: L-threonine is first activated by ATP to form Thr-AMP and then transferred to the acceptor end of tRNA(Thr). Also edits incorrectly charged L-seryl-tRNA(Thr). The sequence is that of Threonine--tRNA ligase from Pseudomonas syringae pv. syringae (strain B728a).